Reading from the N-terminus, the 500-residue chain is Lysine--tRNA ligase (500 aa).

Mg(2+) is bound by residues glutamate 410 and glutamate 417.

Belongs to the class-II aminoacyl-tRNA synthetase family. Homodimer. Mg(2+) serves as cofactor.

It localises to the cytoplasm. The enzyme catalyses tRNA(Lys) + L-lysine + ATP = L-lysyl-tRNA(Lys) + AMP + diphosphate. This chain is Lysine--tRNA ligase, found in Pseudomonas savastanoi pv. phaseolicola (strain 1448A / Race 6) (Pseudomonas syringae pv. phaseolicola (strain 1448A / Race 6)).